The sequence spans 360 residues: GTPase Obg (360 aa).

The 156-residue stretch at 1 to 156 folds into the Obg domain; the sequence is MFVDSVEIII…KCVRLELKLI (156 aa). The OBG-type G domain occupies 157 to 360; sequence ADIGLVGFPN…LKFVLLEALP (204 aa). GTP is bound by residues 163–170, 188–192, 210–213, 279–282, and 341–343; these read GFPNAGKS, FTTLV, DIPG, NKCD, and SAL. 2 residues coordinate Mg(2+): serine 170 and threonine 190.

This sequence belongs to the TRAFAC class OBG-HflX-like GTPase superfamily. OBG GTPase family. As to quaternary structure, monomer. It depends on Mg(2+) as a cofactor.

Its subcellular location is the cytoplasm. Its function is as follows. An essential GTPase which binds GTP, GDP and possibly (p)ppGpp with moderate affinity, with high nucleotide exchange rates and a fairly low GTP hydrolysis rate. Plays a role in control of the cell cycle, stress response, ribosome biogenesis and in those bacteria that undergo differentiation, in morphogenesis control. The polypeptide is GTPase Obg (Helicobacter pylori (strain Shi470)).